We begin with the raw amino-acid sequence, 655 residues long: Alpha-amylase (655 aa).

Glutamate 123 serves as the catalytic Nucleophile. The active-site Proton donor is aspartate 214.

It belongs to the glycosyl hydrolase 57 family.

It carries out the reaction Endohydrolysis of (1-&gt;4)-alpha-D-glucosidic linkages in polysaccharides containing three or more (1-&gt;4)-alpha-linked D-glucose units.. The polypeptide is Alpha-amylase (amyA) (Pyrococcus abyssi (strain GE5 / Orsay)).